Consider the following 347-residue polypeptide: Probable tRNA N6-adenosine threonylcarbamoyltransferase (347 aa).

Residues H109, H113, and Y130 each contribute to the a divalent metal cation site. Residues 130 to 134, D162, G177, E181, and N277 contribute to the substrate site; that span reads YVSGG. D305 serves as a coordination point for a divalent metal cation.

This sequence belongs to the KAE1 / TsaD family. Component of the EKC/KEOPS complex; the whole complex dimerizes. A divalent metal cation is required as a cofactor.

It localises to the cytoplasm. Its subcellular location is the nucleus. The enzyme catalyses L-threonylcarbamoyladenylate + adenosine(37) in tRNA = N(6)-L-threonylcarbamoyladenosine(37) in tRNA + AMP + H(+). Its function is as follows. Component of the EKC/KEOPS complex that is required for the formation of a threonylcarbamoyl group on adenosine at position 37 (t(6)A37) in tRNAs that read codons beginning with adenine. The complex is probably involved in the transfer of the threonylcarbamoyl moiety of threonylcarbamoyl-AMP (TC-AMP) to the N6 group of A37. Likely plays a direct catalytic role in this reaction, but requires other protein(s) of the complex to fulfill this activity. This Drosophila melanogaster (Fruit fly) protein is Probable tRNA N6-adenosine threonylcarbamoyltransferase.